Here is a 751-residue protein sequence, read N- to C-terminus: Catalase-peroxidase (751 aa).

A disordered region spans residues M1 to R24. The tryptophyl-tyrosyl-methioninium (Trp-Tyr) (with M-267) cross-link spans W95–Y241. The active-site Proton acceptor is H96. The tryptophyl-tyrosyl-methioninium (Tyr-Met) (with W-95) cross-link spans Y241 to M267. H282 contributes to the heme b binding site.

Belongs to the peroxidase family. Peroxidase/catalase subfamily. In terms of assembly, homodimer or homotetramer. It depends on heme b as a cofactor. Post-translationally, formation of the three residue Trp-Tyr-Met cross-link is important for the catalase, but not the peroxidase activity of the enzyme.

The protein resides in the cytoplasm. The catalysed reaction is H2O2 + AH2 = A + 2 H2O. It carries out the reaction 2 H2O2 = O2 + 2 H2O. Its function is as follows. Bifunctional enzyme with both catalase and broad-spectrum peroxidase activity. This is Catalase-peroxidase from Aspergillus oryzae (strain ATCC 42149 / RIB 40) (Yellow koji mold).